The primary structure comprises 103 residues: MFVKVGDKVRVISGKDKGKEGTIKQTLAKKNRVVVEGLNMIKKHQKPNNANPQGGILDVEAPMDVSNVMLIDPSTNEPTRVGFKTVDGKKVRVSKKSGESIDK.

Belongs to the universal ribosomal protein uL24 family. As to quaternary structure, part of the 50S ribosomal subunit.

Its function is as follows. One of two assembly initiator proteins, it binds directly to the 5'-end of the 23S rRNA, where it nucleates assembly of the 50S subunit. One of the proteins that surrounds the polypeptide exit tunnel on the outside of the subunit. This Pediococcus pentosaceus (strain ATCC 25745 / CCUG 21536 / LMG 10740 / 183-1w) protein is Large ribosomal subunit protein uL24.